The sequence spans 261 residues: Probable trans-aconitate 2-methyltransferase (261 aa).

Belongs to the methyltransferase superfamily. Tam family.

The protein resides in the cytoplasm. The catalysed reaction is trans-aconitate + S-adenosyl-L-methionine = (E)-3-(methoxycarbonyl)pent-2-enedioate + S-adenosyl-L-homocysteine. Its function is as follows. Catalyzes the S-adenosylmethionine monomethyl esterification of trans-aconitate. This is Probable trans-aconitate 2-methyltransferase from Mycobacterium bovis (strain ATCC BAA-935 / AF2122/97).